A 195-amino-acid polypeptide reads, in one-letter code: MKLSDTDIRRYMAEGRIAIDPVPGEDAIGAMSVDLQLGDSFRVFVPGKVSHVDLAPPGGIKGRDIEALMGHVEVGENEAFYLHPGEFALGITIQRVRLPADVAGRLDGRSSLARLGLMVHATAHTIDPGWDGRITLEFFNCGPLPLAMRPGMRICAISFEALMSPTSKPYAASPTAKYKDQLAPLPSRLASDQSA.

Residues 109–114 (RSSLAR), Asp-127, 135–137 (TLE), Tyr-170, Lys-177, and Gln-181 contribute to the dCTP site. Catalysis depends on Glu-137, which acts as the Proton donor/acceptor.

It belongs to the dCTP deaminase family. In terms of assembly, homotrimer.

It catalyses the reaction dCTP + H2O + H(+) = dUTP + NH4(+). The protein operates within pyrimidine metabolism; dUMP biosynthesis; dUMP from dCTP (dUTP route): step 1/2. Its function is as follows. Catalyzes the deamination of dCTP to dUTP. The polypeptide is dCTP deaminase (Rhodospirillum rubrum (strain ATCC 11170 / ATH 1.1.1 / DSM 467 / LMG 4362 / NCIMB 8255 / S1)).